The chain runs to 315 residues: NADH-ubiquinone oxidoreductase chain 1 (315 aa).

8 consecutive transmembrane segments (helical) span residues 6-26 (FILS…SVAF), 80-100 (ISPI…PFFV), 107-127 (LGGL…MIAG), 153-173 (LALI…MYFF), 177-197 (IYIW…TISL), 229-249 (LIFM…CVIF), 253-273 (DVFN…FIWA), and 292-312 (CFLS…ILLF).

Belongs to the complex I subunit 1 family.

It localises to the mitochondrion inner membrane. The catalysed reaction is a ubiquinone + NADH + 5 H(+)(in) = a ubiquinol + NAD(+) + 4 H(+)(out). Core subunit of the mitochondrial membrane respiratory chain NADH dehydrogenase (Complex I) that is believed to belong to the minimal assembly required for catalysis. Complex I functions in the transfer of electrons from NADH to the respiratory chain. The immediate electron acceptor for the enzyme is believed to be ubiquinone. This Drosophila persimilis (Fruit fly) protein is NADH-ubiquinone oxidoreductase chain 1 (mt:ND1).